The chain runs to 139 residues: Ribosome-binding factor A (139 aa).

A disordered region spans residues 112–139 (EARTQGQAAPAPDVEPAPGAAPDDEAEE). Residues 119-132 (AAPAPDVEPAPGAA) show a composition bias toward low complexity.

Belongs to the RbfA family. Monomer. Binds 30S ribosomal subunits, but not 50S ribosomal subunits or 70S ribosomes.

The protein resides in the cytoplasm. One of several proteins that assist in the late maturation steps of the functional core of the 30S ribosomal subunit. Associates with free 30S ribosomal subunits (but not with 30S subunits that are part of 70S ribosomes or polysomes). Required for efficient processing of 16S rRNA. May interact with the 5'-terminal helix region of 16S rRNA. In Anaeromyxobacter dehalogenans (strain 2CP-1 / ATCC BAA-258), this protein is Ribosome-binding factor A.